Reading from the N-terminus, the 111-residue chain is Putative lipid-binding protein AIR1 (111 aa).

A signal peptide spans 1–23 (MAPRTPLALFVSLNLLFFTYTSA). 3 cysteine pairs are disulfide-bonded: cysteine 28-cysteine 58, cysteine 38-cysteine 57, and cysteine 74-cysteine 110.

The protein belongs to the plant LTP family. PEARLI1 subfamily.

It localises to the secreted. This Arabidopsis thaliana (Mouse-ear cress) protein is Putative lipid-binding protein AIR1 (AIR1).